A 201-amino-acid chain; its full sequence is Small ribosomal subunit protein uS4c (201 aa).

The S4 RNA-binding domain occupies 89–157; the sequence is MRLDNILFRL…VQNYIASSDP (69 aa).

Belongs to the universal ribosomal protein uS4 family. As to quaternary structure, part of the 30S ribosomal subunit. Contacts protein S5. The interaction surface between S4 and S5 is involved in control of translational fidelity.

The protein localises to the plastid. It localises to the chloroplast. One of the primary rRNA binding proteins, it binds directly to 16S rRNA where it nucleates assembly of the body of the 30S subunit. Its function is as follows. With S5 and S12 plays an important role in translational accuracy. The polypeptide is Small ribosomal subunit protein uS4c (rps4) (Hordeum vulgare (Barley)).